The following is a 719-amino-acid chain: Polyribonucleotide nucleotidyltransferase (719 aa).

2 residues coordinate Mg(2+): Asp-490 and Asp-496. The KH domain occupies 557-619 (PKIEIIIIPK…KSIDAALTRI (63 aa)). One can recognise an S1 motif domain in the interval 629-699 (GEIYEGKIRS…KTGKFKLSHK (71 aa)).

The protein belongs to the polyribonucleotide nucleotidyltransferase family. It depends on Mg(2+) as a cofactor.

Its subcellular location is the cytoplasm. The catalysed reaction is RNA(n+1) + phosphate = RNA(n) + a ribonucleoside 5'-diphosphate. Functionally, involved in mRNA degradation. Catalyzes the phosphorolysis of single-stranded polyribonucleotides processively in the 3'- to 5'-direction. In Azobacteroides pseudotrichonymphae genomovar. CFP2, this protein is Polyribonucleotide nucleotidyltransferase.